The chain runs to 464 residues: Putative dipeptidase CPC735_014430 (464 aa).

The tract at residues 1-34 is disordered; sequence MSTMSARDNEKGSARSQPSHAAASEIENVPRPSR. Residues 40 to 56 traverse the membrane as a helical segment; the sequence is GTMIKVFIICACAGIVS. 3 residues coordinate Zn(2+): H93, D95, and E206. A disulfide bridge links C145 with C235. H233 provides a ligand contact to substrate. Residues H277 and H298 each coordinate Zn(2+). R309 and D369 together coordinate substrate. The N-linked (GlcNAc...) asparagine glycan is linked to N382.

The protein belongs to the metallo-dependent hydrolases superfamily. Peptidase M19 family. Zn(2+) serves as cofactor.

It localises to the membrane. The enzyme catalyses an L-aminoacyl-L-amino acid + H2O = 2 an L-alpha-amino acid. Its function is as follows. Hydrolyzes a wide range of dipeptides. The polypeptide is Putative dipeptidase CPC735_014430 (Coccidioides posadasii (strain C735) (Valley fever fungus)).